A 604-amino-acid polypeptide reads, in one-letter code: Sulfite reductase [NADPH] flavoprotein alpha-component (604 aa).

A Flavodoxin-like domain is found at 66–204 (VTVLSASQTG…AANAWTDNIA (139 aa)). FMN contacts are provided by residues 72-77 (SQTGNA), 119-122 (STQG), and 155-164 (LGDSSYPNFC). In terms of domain architecture, FAD-binding FR-type spans 239-453 (ADPFPAALLA…VERNDGFRLP (215 aa)). FAD contacts are provided by residues T327, Q361, 391–394 (RLYS), 409–411 (TVG), and 424–427 (GGAS). NADP(+)-binding positions include 524 to 525 (SR), 530 to 534 (KIYVQ), and D566. Y604 contacts FAD.

The protein belongs to the NADPH-dependent sulphite reductase flavoprotein subunit CysJ family. It in the N-terminal section; belongs to the flavodoxin family. In the C-terminal section; belongs to the flavoprotein pyridine nucleotide cytochrome reductase family. As to quaternary structure, alpha(8)-beta(8). The alpha component is a flavoprotein, the beta component is a hemoprotein. Requires FAD as cofactor. FMN serves as cofactor.

The catalysed reaction is hydrogen sulfide + 3 NADP(+) + 3 H2O = sulfite + 3 NADPH + 4 H(+). It participates in sulfur metabolism; hydrogen sulfide biosynthesis; hydrogen sulfide from sulfite (NADPH route): step 1/1. Functionally, component of the sulfite reductase complex that catalyzes the 6-electron reduction of sulfite to sulfide. This is one of several activities required for the biosynthesis of L-cysteine from sulfate. The flavoprotein component catalyzes the electron flow from NADPH -&gt; FAD -&gt; FMN to the hemoprotein component. The sequence is that of Sulfite reductase [NADPH] flavoprotein alpha-component from Neisseria meningitidis serogroup C (strain 053442).